A 120-amino-acid polypeptide reads, in one-letter code: Large ribosomal subunit protein uL18 (120 aa).

Basic and acidic residues predominate over residues 1–10; it reads MSTPRKEQTQ. The tract at residues 1 to 25 is disordered; that stretch reads MSTPRKEQTQKRHRRLRRHLEGTPE.

Belongs to the universal ribosomal protein uL18 family. In terms of assembly, part of the 50S ribosomal subunit; part of the 5S rRNA/L5/L18/L25 subcomplex. Contacts the 5S and 23S rRNAs.

Its function is as follows. This is one of the proteins that bind and probably mediate the attachment of the 5S RNA into the large ribosomal subunit, where it forms part of the central protuberance. The chain is Large ribosomal subunit protein uL18 from Synechococcus sp. (strain RCC307).